The sequence spans 247 residues: 1-(5-phosphoribosyl)-5-[(5-phosphoribosylamino)methylideneamino] imidazole-4-carboxamide isomerase 2 (247 aa).

Glu8 serves as the catalytic Proton acceptor. Catalysis depends on Asp128, which acts as the Proton donor.

The protein belongs to the HisA/HisF family.

Its subcellular location is the cytoplasm. It catalyses the reaction 1-(5-phospho-beta-D-ribosyl)-5-[(5-phospho-beta-D-ribosylamino)methylideneamino]imidazole-4-carboxamide = 5-[(5-phospho-1-deoxy-D-ribulos-1-ylimino)methylamino]-1-(5-phospho-beta-D-ribosyl)imidazole-4-carboxamide. Its pathway is amino-acid biosynthesis; L-histidine biosynthesis; L-histidine from 5-phospho-alpha-D-ribose 1-diphosphate: step 4/9. The chain is 1-(5-phosphoribosyl)-5-[(5-phosphoribosylamino)methylideneamino] imidazole-4-carboxamide isomerase 2 from Ruegeria pomeroyi (strain ATCC 700808 / DSM 15171 / DSS-3) (Silicibacter pomeroyi).